The following is a 159-amino-acid chain: Transcription elongation factor GreA (159 aa).

A coiled-coil region spans residues 43-75 (LSENAEYDAAREEQSQLEAKIGEIENKLASATI).

It belongs to the GreA/GreB family.

Its function is as follows. Necessary for efficient RNA polymerase transcription elongation past template-encoded arresting sites. The arresting sites in DNA have the property of trapping a certain fraction of elongating RNA polymerases that pass through, resulting in locked ternary complexes. Cleavage of the nascent transcript by cleavage factors such as GreA or GreB allows the resumption of elongation from the new 3'terminus. GreA releases sequences of 2 to 3 nucleotides. The protein is Transcription elongation factor GreA of Chlorobaculum tepidum (strain ATCC 49652 / DSM 12025 / NBRC 103806 / TLS) (Chlorobium tepidum).